The primary structure comprises 243 residues: uncharacterized protein (243 aa).

This is an uncharacterized protein from Acanthamoeba polyphaga (Amoeba).